The following is a 374-amino-acid chain: Guanine nucleotide-binding protein subunit alpha-15 (374 aa).

The 334-residue stretch at 41-374 (EELKLLLLGP…ARYLDEINLL (334 aa)) folds into the G-alpha domain. The segment at 44–57 (KLLLLGPGESGKST) is G1 motif. Residues 49 to 56 (GPGESGKS), 183 to 189 (LRSRMPT), 208 to 212 (DVGGQ), 277 to 280 (NKTD), and alanine 346 contribute to the GTP site. Mg(2+) contacts are provided by serine 56 and threonine 189. A G2 motif region spans residues 181–189 (DVLRSRMPT). The interval 204–213 (LRIVDVGGQR) is G3 motif. Positions 273 to 280 (ILFLNKTD) are G4 motif. Residues 344 to 349 (TCATDT) form a G5 motif region.

This sequence belongs to the G-alpha family. G(q) subfamily. In terms of assembly, g proteins are composed of 3 units; alpha, beta and gamma. The alpha chain contains the guanine nucleotide binding site. Expressed primarily in hematopoietic cells. Coexpressed with EDG6 at the same relative levels in all tissues examined, with the highest levels in adult spleen and lung.

Functionally, guanine nucleotide-binding proteins (G proteins) are involved as modulators or transducers in various transmembrane signaling systems. The protein is Guanine nucleotide-binding protein subunit alpha-15 (Gna15) of Mus musculus (Mouse).